Reading from the N-terminus, the 406-residue chain is Tryptophan synthase beta chain (406 aa).

Residue Lys-99 is modified to N6-(pyridoxal phosphate)lysine.

It belongs to the TrpB family. In terms of assembly, tetramer of two alpha and two beta chains. Pyridoxal 5'-phosphate serves as cofactor.

It carries out the reaction (1S,2R)-1-C-(indol-3-yl)glycerol 3-phosphate + L-serine = D-glyceraldehyde 3-phosphate + L-tryptophan + H2O. It participates in amino-acid biosynthesis; L-tryptophan biosynthesis; L-tryptophan from chorismate: step 5/5. Its function is as follows. The beta subunit is responsible for the synthesis of L-tryptophan from indole and L-serine. The sequence is that of Tryptophan synthase beta chain from Rhizobium meliloti (strain 1021) (Ensifer meliloti).